Reading from the N-terminus, the 104-residue chain is Phosphoribosyl-ATP pyrophosphatase (104 aa).

The protein belongs to the PRA-PH family.

It localises to the cytoplasm. It carries out the reaction 1-(5-phospho-beta-D-ribosyl)-ATP + H2O = 1-(5-phospho-beta-D-ribosyl)-5'-AMP + diphosphate + H(+). It participates in amino-acid biosynthesis; L-histidine biosynthesis; L-histidine from 5-phospho-alpha-D-ribose 1-diphosphate: step 2/9. This chain is Phosphoribosyl-ATP pyrophosphatase, found in Methanocorpusculum labreanum (strain ATCC 43576 / DSM 4855 / Z).